Consider the following 380-residue polypeptide: Ceramide-binding protein svf1 (380 aa).

The interval 1 to 18 (MKAWLQSSISYYTGTAEP) is peripherally associates with membranes.

This sequence belongs to the SVF1 family.

It localises to the golgi apparatus. It is found in the cis-Golgi network membrane. The protein resides in the endoplasmic reticulum membrane. Its subcellular location is the cytoplasm. The protein localises to the nucleus. In terms of biological role, ceramide-binding protein that may transfer ceramides from the endoplasmic reticulum membrane to the cis-Golgi network membrane, and is thereby required for the biosynthesis of complex sphingolipids. The polypeptide is Ceramide-binding protein svf1 (Schizosaccharomyces pombe (strain 972 / ATCC 24843) (Fission yeast)).